The following is a 586-amino-acid chain: Acyl-coenzyme A synthetase ACSM3, mitochondrial (586 aa).

The transit peptide at 1 to 27 (MLARVTRKMLRHAKCFQRLAIFGSVRA) directs the protein to the mitochondrion. N6-succinyllysine occurs at positions 73 and 106. K157 bears the N6-acetyllysine mark. ATP-binding positions include 235–243 (TSGTSGYPK), 374–379 (EGYGQT), D461, R476, and K572.

This sequence belongs to the ATP-dependent AMP-binding enzyme family. Mg(2+) serves as cofactor. Mn(2+) is required as a cofactor.

The protein localises to the mitochondrion. It is found in the mitochondrion matrix. The catalysed reaction is a medium-chain fatty acid + ATP + CoA = a medium-chain fatty acyl-CoA + AMP + diphosphate. The enzyme catalyses propanoate + ATP + CoA = propanoyl-CoA + AMP + diphosphate. It carries out the reaction butanoate + ATP + CoA = butanoyl-CoA + AMP + diphosphate. It catalyses the reaction 2-methylpropanoate + ATP + CoA = 2-methylpropanoyl-CoA + AMP + diphosphate. The catalysed reaction is 2-methylbutanoate + ATP + CoA = 2-methylbutanoyl-CoA + AMP + diphosphate. The enzyme catalyses octanoate + ATP + CoA = octanoyl-CoA + AMP + diphosphate. Catalyzes the activation of fatty acids by CoA to produce an acyl-CoA, the first step in fatty acid metabolism. Capable of activating medium-chain fatty acids with a preference for isobutyrate among fatty acids with 2-6 carbon atoms. This Homo sapiens (Human) protein is Acyl-coenzyme A synthetase ACSM3, mitochondrial (ACSM3).